Reading from the N-terminus, the 414-residue chain is MKTIKDRIAKWSAIGLLSAVAATAFYAPSASAHGEKSQAAFMRMRTIHWYDLSWSKEKVKINETVEIKGKFHVFEGWPETVDEPDVAFLNVGMPGPVFIRKESYIGGQLVPRSVRLEIGKTYDFRVVLKARRPGDWHVHTMMNVQGGGPIIGPGKWITVEGSMSEFRNPVTTLTGQTVDLENYNEGNTYFWHAFWFAIGVAWIGYWSRRPIFIPRLLMVDAGRADELVSATDRKVAMGFLAATILIVVMAMSSANSKYPITIPLQAGTMRGMKPLELPAPTVSVKVEDATYRVPGRAMRMKLTITNHGNSPIRLGEFYTASVRFLDSDVYKDTTGYPEDLLAEDGLSVSDNSPLAPGETRTVDVTASDAAWEVYRLSDIIYDPDSRFAGLLFFFDATGNRQVVQIDAPLIPSFM.

A signal peptide spans 1–32; the sequence is MKTIKDRIAKWSAIGLLSAVAATAFYAPSASA. 5 residues coordinate Cu cation: histidine 33, histidine 48, histidine 72, histidine 137, and histidine 139. Residues 33 to 172 form a cupredoxin domain used to construct soluble pmoB (spmoB) region; that stretch reads HGEKSQAAFM…MSEFRNPVTT (140 aa). A run of 2 helical transmembrane segments spans residues 186-206 and 235-255; these read GNTY…IGYW and VAMG…SSAN. Positions 265–414 are cupredoxin domain used to construct soluble pmoB (spmoB); sequence QAGTMRGMKP…IDAPLIPSFM (150 aa).

M.capsulatus has two forms of methane monooxygenase, a soluble (sMMO) and a membrane-bound (particulate) type (pMMO). The particulate type is a nonamer composed of three alpha:beta:gamma heterotrimeric protomers assembled into a cylindrical structure; the beta and gamma subunits comprise the bulk of the membrane-spanning regions and the soluble regions are derived primarily from alpha subunits which form two antiparallel beta-barrel-like structures each. This assembly, also called pMMO hydroxylase (pMMO-H), is proposed to associate with methanol dehydrogenase (MDH), also designated as pMMO-R, to form the pMMO-C complex which seems to have greater methane monooxygenase activity. Cu(2+) is required as a cofactor.

The protein localises to the membrane. It carries out the reaction methane + a quinol + O2 = methanol + a quinone + H2O. Its function is as follows. Methane monooxygenase is responsible for the initial oxygenation of methane to methanol in methanotrophs. At least in vitro, specific quinols can replace NADH as reductants. The chain is Particulate methane monooxygenase alpha subunit (pmoB1) from Methylococcus capsulatus (strain ATCC 33009 / NCIMB 11132 / Bath).